The chain runs to 612 residues: Dihydroxy-acid dehydratase (612 aa).

Asp81 is a Mg(2+) binding site. [2Fe-2S] cluster is bound at residue Cys122. Mg(2+)-binding residues include Asp123 and Lys124. An N6-carboxylysine modification is found at Lys124. Residue Cys193 coordinates [2Fe-2S] cluster. Residue Glu489 coordinates Mg(2+). The Proton acceptor role is filled by Ser515.

It belongs to the IlvD/Edd family. As to quaternary structure, homodimer. [2Fe-2S] cluster serves as cofactor. The cofactor is Mg(2+).

The enzyme catalyses (2R)-2,3-dihydroxy-3-methylbutanoate = 3-methyl-2-oxobutanoate + H2O. It catalyses the reaction (2R,3R)-2,3-dihydroxy-3-methylpentanoate = (S)-3-methyl-2-oxopentanoate + H2O. The protein operates within amino-acid biosynthesis; L-isoleucine biosynthesis; L-isoleucine from 2-oxobutanoate: step 3/4. It functions in the pathway amino-acid biosynthesis; L-valine biosynthesis; L-valine from pyruvate: step 3/4. Functionally, functions in the biosynthesis of branched-chain amino acids. Catalyzes the dehydration of (2R,3R)-2,3-dihydroxy-3-methylpentanoate (2,3-dihydroxy-3-methylvalerate) into 2-oxo-3-methylpentanoate (2-oxo-3-methylvalerate) and of (2R)-2,3-dihydroxy-3-methylbutanoate (2,3-dihydroxyisovalerate) into 2-oxo-3-methylbutanoate (2-oxoisovalerate), the penultimate precursor to L-isoleucine and L-valine, respectively. This Ectopseudomonas mendocina (strain ymp) (Pseudomonas mendocina) protein is Dihydroxy-acid dehydratase.